A 206-amino-acid chain; its full sequence is Putative metal transport protein HI_1621 (206 aa).

Helical transmembrane passes span 6–26 (GVLH…GIAV), 38–58 (LTAL…PVGI), 72–92 (FLGW…VIFF), 94–114 (FGGF…AVIA), 136–156 (IGAG…VLML), and 165–185 (LVWL…IISV).

Belongs to the CbiM family.

It is found in the cell membrane. Its function is as follows. May be involved in metal transport. This Haemophilus influenzae (strain ATCC 51907 / DSM 11121 / KW20 / Rd) protein is Putative metal transport protein HI_1621.